The chain runs to 246 residues: Triosephosphate isomerase (246 aa).

Residue 9-11 participates in substrate binding; the sequence is NWK. His99 functions as the Electrophile in the catalytic mechanism. Catalysis depends on Glu168, which acts as the Proton acceptor. Residues Gly174, Ser207, and 228-229 each bind substrate; that span reads GG.

The protein belongs to the triosephosphate isomerase family. In terms of assembly, homodimer.

The protein resides in the cytoplasm. It catalyses the reaction D-glyceraldehyde 3-phosphate = dihydroxyacetone phosphate. The protein operates within carbohydrate biosynthesis; gluconeogenesis. Its pathway is carbohydrate degradation; glycolysis; D-glyceraldehyde 3-phosphate from glycerone phosphate: step 1/1. Its function is as follows. Involved in the gluconeogenesis. Catalyzes stereospecifically the conversion of dihydroxyacetone phosphate (DHAP) to D-glyceraldehyde-3-phosphate (G3P). In Prochlorococcus marinus (strain NATL1A), this protein is Triosephosphate isomerase.